The sequence spans 183 residues: Small ribosomal subunit protein uS4c (183 aa).

Residues 82–143 (MRLDNILFRL…KQRSKALIQN (62 aa)) enclose the S4 RNA-binding domain.

This sequence belongs to the universal ribosomal protein uS4 family. In terms of assembly, part of the 30S ribosomal subunit. Contacts protein S5. The interaction surface between S4 and S5 is involved in control of translational fidelity.

Its subcellular location is the plastid. It is found in the chloroplast. One of the primary rRNA binding proteins, it binds directly to 16S rRNA where it nucleates assembly of the body of the 30S subunit. Its function is as follows. With S5 and S12 plays an important role in translational accuracy. The polypeptide is Small ribosomal subunit protein uS4c (rps4) (Freesia sp. (strain Lejeune 1997)).